The chain runs to 115 residues: Nucleoid-associated protein LBL_0065 (115 aa).

It belongs to the YbaB/EbfC family. Homodimer.

It localises to the cytoplasm. The protein resides in the nucleoid. In terms of biological role, binds to DNA and alters its conformation. May be involved in regulation of gene expression, nucleoid organization and DNA protection. In Leptospira borgpetersenii serovar Hardjo-bovis (strain L550), this protein is Nucleoid-associated protein LBL_0065.